Reading from the N-terminus, the 292-residue chain is 4-hydroxy-tetrahydrodipicolinate synthase (292 aa).

Thr-48 contacts pyruvate. Residue Tyr-136 is the Proton donor/acceptor of the active site. Lys-164 (schiff-base intermediate with substrate) is an active-site residue. Residue Ile-204 participates in pyruvate binding.

The protein belongs to the DapA family. Homotetramer; dimer of dimers.

The protein localises to the cytoplasm. It catalyses the reaction L-aspartate 4-semialdehyde + pyruvate = (2S,4S)-4-hydroxy-2,3,4,5-tetrahydrodipicolinate + H2O + H(+). Its pathway is amino-acid biosynthesis; L-lysine biosynthesis via DAP pathway; (S)-tetrahydrodipicolinate from L-aspartate: step 3/4. Its function is as follows. Catalyzes the condensation of (S)-aspartate-beta-semialdehyde [(S)-ASA] and pyruvate to 4-hydroxy-tetrahydrodipicolinate (HTPA). The chain is 4-hydroxy-tetrahydrodipicolinate synthase from Acetivibrio thermocellus (strain ATCC 27405 / DSM 1237 / JCM 9322 / NBRC 103400 / NCIMB 10682 / NRRL B-4536 / VPI 7372) (Clostridium thermocellum).